A 157-amino-acid polypeptide reads, in one-letter code: 2-C-methyl-D-erythritol 2,4-cyclodiphosphate synthase (157 aa).

Residues D9 and H11 each coordinate a divalent metal cation. Residues 9–11 (DVH) and 35–36 (HS) each bind 4-CDP-2-C-methyl-D-erythritol 2-phosphate. H43 is an a divalent metal cation binding site. 4-CDP-2-C-methyl-D-erythritol 2-phosphate contacts are provided by residues 57 to 59 (DIG), 62 to 66 (FPDTD), 101 to 107 (AQKPKMA), 133 to 136 (TTTE), F140, and R143.

Belongs to the IspF family. Homotrimer. A divalent metal cation serves as cofactor.

It carries out the reaction 4-CDP-2-C-methyl-D-erythritol 2-phosphate = 2-C-methyl-D-erythritol 2,4-cyclic diphosphate + CMP. The protein operates within isoprenoid biosynthesis; isopentenyl diphosphate biosynthesis via DXP pathway; isopentenyl diphosphate from 1-deoxy-D-xylulose 5-phosphate: step 4/6. Its function is as follows. Involved in the biosynthesis of isopentenyl diphosphate (IPP) and dimethylallyl diphosphate (DMAPP), two major building blocks of isoprenoid compounds. Catalyzes the conversion of 4-diphosphocytidyl-2-C-methyl-D-erythritol 2-phosphate (CDP-ME2P) to 2-C-methyl-D-erythritol 2,4-cyclodiphosphate (ME-CPP) with a corresponding release of cytidine 5-monophosphate (CMP). This chain is 2-C-methyl-D-erythritol 2,4-cyclodiphosphate synthase, found in Halalkalibacterium halodurans (strain ATCC BAA-125 / DSM 18197 / FERM 7344 / JCM 9153 / C-125) (Bacillus halodurans).